The sequence spans 440 residues: Asparagine--tRNA ligase (440 aa).

Belongs to the class-II aminoacyl-tRNA synthetase family. As to quaternary structure, homodimer.

It localises to the cytoplasm. The catalysed reaction is tRNA(Asn) + L-asparagine + ATP = L-asparaginyl-tRNA(Asn) + AMP + diphosphate + H(+). The protein is Asparagine--tRNA ligase of Chloroflexus aurantiacus (strain ATCC 29364 / DSM 637 / Y-400-fl).